A 444-amino-acid chain; its full sequence is Probable glycine dehydrogenase (decarboxylating) subunit 1 (444 aa).

Belongs to the GcvP family. N-terminal subunit subfamily. In terms of assembly, the glycine cleavage system is composed of four proteins: P, T, L and H. In this organism, the P 'protein' is a heterodimer of two subunits.

It catalyses the reaction N(6)-[(R)-lipoyl]-L-lysyl-[glycine-cleavage complex H protein] + glycine + H(+) = N(6)-[(R)-S(8)-aminomethyldihydrolipoyl]-L-lysyl-[glycine-cleavage complex H protein] + CO2. The glycine cleavage system catalyzes the degradation of glycine. The P protein binds the alpha-amino group of glycine through its pyridoxal phosphate cofactor; CO(2) is released and the remaining methylamine moiety is then transferred to the lipoamide cofactor of the H protein. The polypeptide is Probable glycine dehydrogenase (decarboxylating) subunit 1 (Chlorobaculum parvum (strain DSM 263 / NCIMB 8327) (Chlorobium vibrioforme subsp. thiosulfatophilum)).